The sequence spans 71 residues: ATP synthase subunit c (71 aa).

2 helical membrane-spanning segments follow: residues Ala4–Ile24 and Ile48–Ile68.

It belongs to the ATPase C chain family. As to quaternary structure, F-type ATPases have 2 components, F(1) - the catalytic core - and F(0) - the membrane proton channel. F(1) has five subunits: alpha(3), beta(3), gamma(1), delta(1), epsilon(1). F(0) has three main subunits: a(1), b(2) and c(10-14). The alpha and beta chains form an alternating ring which encloses part of the gamma chain. F(1) is attached to F(0) by a central stalk formed by the gamma and epsilon chains, while a peripheral stalk is formed by the delta and b chains.

The protein resides in the cell membrane. In terms of biological role, f(1)F(0) ATP synthase produces ATP from ADP in the presence of a proton or sodium gradient. F-type ATPases consist of two structural domains, F(1) containing the extramembraneous catalytic core and F(0) containing the membrane proton channel, linked together by a central stalk and a peripheral stalk. During catalysis, ATP synthesis in the catalytic domain of F(1) is coupled via a rotary mechanism of the central stalk subunits to proton translocation. Its function is as follows. Key component of the F(0) channel; it plays a direct role in translocation across the membrane. A homomeric c-ring of between 10-14 subunits forms the central stalk rotor element with the F(1) delta and epsilon subunits. This Clostridium botulinum (strain Alaska E43 / Type E3) protein is ATP synthase subunit c.